A 270-amino-acid chain; its full sequence is Catechol 1,2-dioxygenase (270 aa).

Tyrosine 152, tyrosine 186, histidine 210, and histidine 212 together coordinate Fe cation.

It belongs to the intradiol ring-cleavage dioxygenase family. The cofactor is Fe(3+).

The enzyme catalyses catechol + O2 = cis,cis-muconate + 2 H(+). In Rhodococcus opacus (Nocardia opaca), this protein is Catechol 1,2-dioxygenase (catA).